Reading from the N-terminus, the 466-residue chain is Argininosuccinate lyase (466 aa).

This sequence belongs to the lyase 1 family. Argininosuccinate lyase subfamily.

Its subcellular location is the cytoplasm. The enzyme catalyses 2-(N(omega)-L-arginino)succinate = fumarate + L-arginine. It participates in amino-acid biosynthesis; L-arginine biosynthesis; L-arginine from L-ornithine and carbamoyl phosphate: step 3/3. This Synechococcus elongatus (strain ATCC 33912 / PCC 7942 / FACHB-805) (Anacystis nidulans R2) protein is Argininosuccinate lyase.